Reading from the N-terminus, the 146-residue chain is Copper transporter 5 (146 aa).

The chain crosses the membrane as a helical span at residues 24–44; it reads WLSYILTLIACFVFSAFYQYL. The tract at residues 55 to 74 is disordered; the sequence is SSSRRAPPPPRSSSGVSAPL. The helical transmembrane segment at 101–121 threads the bilayer; that stretch reads LLMLAAMSFNGGVFIAIVVGL.

The protein belongs to the copper transporter (Ctr) (TC 1.A.56) family. SLC31A subfamily. In terms of tissue distribution, highly expressed in leaves and stems and at lower levels in roots and flowers.

It is found in the membrane. Involved in the transport of copper. This is Copper transporter 5 (COPT5) from Arabidopsis thaliana (Mouse-ear cress).